The sequence spans 909 residues: Phosphoenolpyruvate carboxylase (909 aa).

Active-site residues include histidine 151 and lysine 578.

It belongs to the PEPCase type 1 family. Mg(2+) is required as a cofactor.

It catalyses the reaction oxaloacetate + phosphate = phosphoenolpyruvate + hydrogencarbonate. In terms of biological role, forms oxaloacetate, a four-carbon dicarboxylic acid source for the tricarboxylic acid cycle. The sequence is that of Phosphoenolpyruvate carboxylase from Caulobacter vibrioides (strain ATCC 19089 / CIP 103742 / CB 15) (Caulobacter crescentus).